Reading from the N-terminus, the 422-residue chain is 5-hydroxytryptamine receptor 1A (422 aa).

A disordered region spans residues 1–23; that stretch reads MDVLSPGQGNNTTSPPAPFETGG. Topologically, residues 1–38 are extracellular; that stretch reads MDVLSPGQGNNTTSPPAPFETGGNTTGISDVTVSYQVI. Asn-10, Asn-11, and Asn-24 each carry an N-linked (GlcNAc...) asparagine glycan. Residues 39–59 traverse the membrane as a helical segment; sequence TSLLLGTLIFCAVLGNACVVA. The Cytoplasmic portion of the chain corresponds to 60–73; the sequence is AIALERSLQNVANY. Residues 74-98 traverse the membrane as a helical segment; sequence LIGSLAVTDLMVSVLVLPMAALYQV. At 99–107 the chain is on the extracellular side; sequence LNKWTLGQV. A helical transmembrane segment spans residues 108–132; that stretch reads TCDLFIALDVLCCTSSILHLCAIAL. An intrachain disulfide couples Cys-109 to Cys-187. Residues Asp-116 and Cys-120 each coordinate serotonin. Residues 133–135 carry the DRY motif; important for ligand-induced conformation changes motif; sequence DRY. The Cytoplasmic segment spans residues 133 to 152; that stretch reads DRYWAITDPIDYVNKRTPRR. Residues 153–174 traverse the membrane as a helical segment; that stretch reads AAALISLTWLIGFLISIPPMLG. At 175–193 the chain is on the extracellular side; it reads WRTPEDRSDPDACTISKDH. A helical membrane pass occupies residues 194-216; the sequence is GYTIYSTFGAFYIPLLLMLVLYG. The Cytoplasmic segment spans residues 217-346; it reads RIFRAARFRI…LARERKTVKT (130 aa). The disordered stretch occupies residues 235–262; that stretch reads KTGADTRHGASPAPQPKKSVNGESGSRN. 1D-myo-inositol 4-phosphate-binding residues include Thr-314, Lys-345, Thr-346, and Gly-352. A helical transmembrane segment spans residues 347–370; that stretch reads LGIIMGTFILCWLPFFIVALVLPF. Residues 371–378 lie on the Extracellular side of the membrane; that stretch reads CESSCHMP. A helical membrane pass occupies residues 379–403; sequence TLLGAIINWLGYSNSLLNPVIYAYF. The NPxxY motif; important for ligand-induced conformation changes and signaling motif lies at 396–400; it reads NPVIY. 1D-myo-inositol 4-phosphate-binding residues include Phe-403, Asn-404, and Lys-405. The Cytoplasmic portion of the chain corresponds to 404–422; that stretch reads NKDFQNAFKKIIKCKFCRQ.

This sequence belongs to the G-protein coupled receptor 1 family. 5-hydroxytryptamine receptor subfamily. HTR1A sub-subfamily. Heterodimer; heterodimerizes with GPER1. Interacts with YIF1B. Interacts with GPR39 and GALR1. As to expression, detected in lymph nodes, thymus and spleen. Detected in activated T-cells, but not in resting T-cells.

The protein localises to the cell membrane. Its subcellular location is the cell projection. It is found in the dendrite. Its activity is regulated as follows. G-protein coupled receptor activity is regulated by lipids: phosphatidylinositol 4-phosphate increases HTR1A-mediated activity. Binding to aripiprazol drug is regulated by cholesterol, which shapes the ligand-binding pocket, determining the specificity for aripiprazol. Activated by IHCH-7179 small molecule: IHCH-7179 acts both as an agonist activator for HTR1A and as an antagonist inhibitor for HTR2A. Activated by SEP-363856 small molecule: IHCH-7179 acts both as an agonist activator for HTR1A and TAAR1. Its function is as follows. G-protein coupled receptor for 5-hydroxytryptamine (serotonin). Also functions as a receptor for various drugs and psychoactive substances. Ligand binding causes a conformation change that triggers signaling via guanine nucleotide-binding proteins (G proteins) and modulates the activity of downstream effectors, such as adenylate cyclase. HTR1A is coupled to G(i)/G(o) G alpha proteins and mediates inhibitory neurotransmission: signaling inhibits adenylate cyclase activity and activates a phosphatidylinositol-calcium second messenger system that regulates the release of Ca(2+) ions from intracellular stores. Beta-arrestin family members regulate signaling by mediating both receptor desensitization and resensitization processes. Plays a role in the regulation of 5-hydroxytryptamine release and in the regulation of dopamine and 5-hydroxytryptamine metabolism. Plays a role in the regulation of dopamine and 5-hydroxytryptamine levels in the brain, and thereby affects neural activity, mood and behavior. Plays a role in the response to anxiogenic stimuli. This Homo sapiens (Human) protein is 5-hydroxytryptamine receptor 1A.